The sequence spans 288 residues: 4-hydroxy-3-methylbut-2-enyl diphosphate reductase (288 aa).

Cys13 serves as a coordination point for [4Fe-4S] cluster. Residues His41 and His75 each coordinate (2E)-4-hydroxy-3-methylbut-2-enyl diphosphate. Dimethylallyl diphosphate-binding residues include His41 and His75. Positions 41 and 75 each coordinate isopentenyl diphosphate. Cys97 is a binding site for [4Fe-4S] cluster. His130 contributes to the (2E)-4-hydroxy-3-methylbut-2-enyl diphosphate binding site. His130 is a binding site for dimethylallyl diphosphate. Position 130 (His130) interacts with isopentenyl diphosphate. Glu132 serves as the catalytic Proton donor. Thr168 lines the (2E)-4-hydroxy-3-methylbut-2-enyl diphosphate pocket. Cys199 contributes to the [4Fe-4S] cluster binding site. The (2E)-4-hydroxy-3-methylbut-2-enyl diphosphate site is built by Ser227, Ser228, Asn229, and Ser271. Positions 227, 228, 229, and 271 each coordinate dimethylallyl diphosphate. Ser227, Ser228, Asn229, and Ser271 together coordinate isopentenyl diphosphate.

The protein belongs to the IspH family. [4Fe-4S] cluster serves as cofactor.

The catalysed reaction is isopentenyl diphosphate + 2 oxidized [2Fe-2S]-[ferredoxin] + H2O = (2E)-4-hydroxy-3-methylbut-2-enyl diphosphate + 2 reduced [2Fe-2S]-[ferredoxin] + 2 H(+). The enzyme catalyses dimethylallyl diphosphate + 2 oxidized [2Fe-2S]-[ferredoxin] + H2O = (2E)-4-hydroxy-3-methylbut-2-enyl diphosphate + 2 reduced [2Fe-2S]-[ferredoxin] + 2 H(+). It functions in the pathway isoprenoid biosynthesis; dimethylallyl diphosphate biosynthesis; dimethylallyl diphosphate from (2E)-4-hydroxy-3-methylbutenyl diphosphate: step 1/1. Its pathway is isoprenoid biosynthesis; isopentenyl diphosphate biosynthesis via DXP pathway; isopentenyl diphosphate from 1-deoxy-D-xylulose 5-phosphate: step 6/6. Catalyzes the conversion of 1-hydroxy-2-methyl-2-(E)-butenyl 4-diphosphate (HMBPP) into a mixture of isopentenyl diphosphate (IPP) and dimethylallyl diphosphate (DMAPP). Acts in the terminal step of the DOXP/MEP pathway for isoprenoid precursor biosynthesis. The polypeptide is 4-hydroxy-3-methylbut-2-enyl diphosphate reductase (Phocaeicola vulgatus (strain ATCC 8482 / DSM 1447 / JCM 5826 / CCUG 4940 / NBRC 14291 / NCTC 11154) (Bacteroides vulgatus)).